The following is a 267-amino-acid chain: Hydroxyacylglutathione hydrolase (267 aa).

Positions 55, 57, 59, 60, 121, 138, and 176 each coordinate Zn(2+).

Belongs to the metallo-beta-lactamase superfamily. Glyoxalase II family. In terms of assembly, monomer. It depends on Zn(2+) as a cofactor.

The enzyme catalyses an S-(2-hydroxyacyl)glutathione + H2O = a 2-hydroxy carboxylate + glutathione + H(+). Its pathway is secondary metabolite metabolism; methylglyoxal degradation; (R)-lactate from methylglyoxal: step 2/2. In terms of biological role, thiolesterase that catalyzes the hydrolysis of S-D-lactoyl-glutathione to form glutathione and D-lactic acid. The protein is Hydroxyacylglutathione hydrolase of Shewanella oneidensis (strain ATCC 700550 / JCM 31522 / CIP 106686 / LMG 19005 / NCIMB 14063 / MR-1).